A 193-amino-acid polypeptide reads, in one-letter code: Ion-translocating oxidoreductase complex subunit B (193 aa).

Positions 1–26 (MSTMLIAVILLTLLALFFGVLLGFAA) are hydrophobic. In terms of domain architecture, 4Fe-4S spans 32–90 (EGNPIVDELEAILPQTQCGQCGYPGCRPYAEAIANGDKVNKCPPGGTATMEKLANLMGV). 12 residues coordinate [4Fe-4S] cluster: Cys49, Cys52, Cys57, Cys73, Cys114, Cys117, Cys120, Cys124, Cys144, Cys147, Cys150, and Cys154. 2 consecutive 4Fe-4S ferredoxin-type domains span residues 105–134 (KVAY…GAGK) and 136–164 (MHTV…MIPV).

This sequence belongs to the 4Fe4S bacterial-type ferredoxin family. RnfB subfamily. As to quaternary structure, the complex is composed of six subunits: RnfA, RnfB, RnfC, RnfD, RnfE and RnfG. [4Fe-4S] cluster is required as a cofactor.

Its subcellular location is the cell inner membrane. In terms of biological role, part of a membrane-bound complex that couples electron transfer with translocation of ions across the membrane. This chain is Ion-translocating oxidoreductase complex subunit B, found in Shewanella sp. (strain ANA-3).